The primary structure comprises 361 residues: Peptide chain release factor 1 (361 aa).

The residue at position 237 (Gln237) is an N5-methylglutamine. Over residues 287–297 the composition is skewed to basic and acidic residues; it reads KQQKEQSDTRK. Positions 287–313 are disordered; the sequence is KQQKEQSDTRKSLVGSGDRSERIRTYN.

This sequence belongs to the prokaryotic/mitochondrial release factor family. Methylated by PrmC. Methylation increases the termination efficiency of RF1.

The protein localises to the cytoplasm. Peptide chain release factor 1 directs the termination of translation in response to the peptide chain termination codons UAG and UAA. This is Peptide chain release factor 1 from Francisella tularensis subsp. novicida (strain U112).